The sequence spans 479 residues: NADH oxidase (479 aa).

FAD contacts are provided by residues 8 to 12 (GVNHA), D33, C43, V80, 111 to 114 (ASGA), K149, and Y177. H11 functions as the Proton acceptor in the catalytic mechanism. C43 serves as the catalytic Redox-active. C43 is subject to Cysteine sulfinic acid (-SO2H). NAD(+) contacts are provided by residues 170–185 (VAIV…LAEA), D197, and G264. Residues 295-305 (LNHENVYVIGG), L322, A323, and T324 each bind FAD. NAD(+) is bound at residue A353. F450 provides a ligand contact to FAD.

This sequence belongs to the class-III pyridine nucleotide-disulfide oxidoreductase family. FAD is required as a cofactor.

The enzyme catalyses 2 NADH + O2 + 2 H(+) = 2 NAD(+) + 2 H2O. Catalyzes the four-electron reduction of molecular oxygen to water. This chain is NADH oxidase (nox), found in Mycoplasma pneumoniae (strain ATCC 29342 / M129 / Subtype 1) (Mycoplasmoides pneumoniae).